Reading from the N-terminus, the 330-residue chain is Mucin-15 (330 aa).

The N-terminal stretch at 1–23 (MLTSAKILLISILSSLLLFGSHG) is a signal peptide. The interval 23–115 (GEEGQKTNTT…SPRSPSTHSF (93 aa)) is disordered. Residues 24-232 (EEGQKTNTTE…SDPQEENRNT (209 aa)) are Extracellular-facing. N-linked (GlcNAc...) asparagine glycans are attached at residues asparagine 30, asparagine 44, asparagine 54, asparagine 71, asparagine 79, asparagine 89, asparagine 94, asparagine 122, asparagine 138, asparagine 147, asparagine 154, asparagine 162, asparagine 175, asparagine 214, and asparagine 221. The segment covering 42 to 56 (MENQSVPLESKANLT) has biased composition (polar residues). Positions 86-115 (FYSNLSTDNSSRSPSLMPTLSPRSPSTHSF) are enriched in polar residues. Residues 164-185 (SITVSNLPSGPNTTSVTPMVTE) are disordered. A helical membrane pass occupies residues 233–253 (GVVFGAILGAILGASLLSLVG). At 254 to 330 (YLLCGKRKTD…DDIPPLRTSV (77 aa)) the chain is on the cytoplasmic side. A disordered region spans residues 279–330 (LRLDNAPEPYDMSFGNSSYYNPTANDSSTSAGGENAHDSIPMDDIPPLRTSV). The span at 292 to 310 (FGNSSYYNPTANDSSTSAG) shows a compositional bias: polar residues.

In terms of processing, highly glycosylated (N- and O-linked carbohydrates). In terms of tissue distribution, mainly expressed on apical surfaces of the mammary epithelial cells.

The protein localises to the cell membrane. Its subcellular location is the secreted. The protein is Mucin-15 (MUC15) of Bos taurus (Bovine).